Here is an 898-residue protein sequence, read N- to C-terminus: Endoplasmic reticulum metallopeptidase 1 (898 aa).

Met-1 carries the N-acetylmethionine modification. Residues 1-55 form a disordered region; that stretch reads MEWSSESAAVRRHRGTAERREGEAAASHRQREASAQEDAKGVGRMWGKTENGGGS. Residues 1 to 66 lie on the Cytoplasmic side of the membrane; sequence MEWSSESAAV…VAKTALSEAR (66 aa). Residues 29 to 41 show a composition bias toward basic and acidic residues; it reads RQREASAQEDAKG. The helical transmembrane segment at 67-87 threads the bilayer; that stretch reads TALALALYLLALRALVQLSLQ. Residues 88 to 393 lie on the Lumenal side of the membrane; the sequence is RLVLSRTSGL…SSSEYRHGSM (306 aa). N-linked (GlcNAc...) asparagine glycosylation is present at Asn-176. A disulfide bridge connects residues Cys-198 and Cys-216. 2 residues coordinate Zn(2+): His-199 and Asp-211. Glu-245 acts as the Proton acceptor in catalysis. Zn(2+) contacts are provided by Glu-246, Glu-272, and His-348. The chain crosses the membrane as a helical span at residues 394-414; sequence VFFDVLGLLVIAYPSRVGSII. At 415-451 the chain is on the cytoplasmic side; that stretch reads NYMVVMAVVLYLGKKLLRPKHRNANYMRDFLCGLGIT. Residues 452–472 form a helical membrane-spanning segment; sequence FISWFTSLVTVLIIAVFISLI. The Lumenal portion of the chain corresponds to 473–480; the sequence is GQSLSWYN. A helical membrane pass occupies residues 481 to 501; the sequence is YFYIAVCLYGTATVAKIIFIH. At 502-515 the chain is on the cytoplasmic side; the sequence is TLAKRFYYMNASDL. The helical transmembrane segment at 516–538 threads the bilayer; the sequence is YLGELFFDTSLFVHCAFLVALTY. Residues 539-542 are Lumenal-facing; that stretch reads QGFC. A helical membrane pass occupies residues 543–562; the sequence is SAFMSAVWVVFPLLTKLCVY. The Cytoplasmic portion of the chain corresponds to 563–573; sequence KDFKKHGAQGR. A helical transmembrane segment spans residues 574 to 594; it reads FVALYLLGMFIPYLYGLYLIW. At 595 to 615 the chain is on the lumenal side; sequence AVFEMFTPILGRSGSEIPPDV. Residues 616-636 traverse the membrane as a helical segment; sequence VLASILAVCVMILSSYFITFI. Over 637-645 the chain is Cytoplasmic; that stretch reads YLVNSTKKT. Residues 646–666 form a helical membrane-spanning segment; that stretch reads ILTLILVCAVTFLLVCSGAFF. Residues 667–898 are Lumenal-facing; it reads PYSSNPESPK…WVSTYSLFVF (232 aa). N-linked (GlcNAc...) asparagine glycosylation occurs at Asn-724.

Belongs to the peptidase M28 family. The cofactor is Zn(2+).

The protein resides in the endoplasmic reticulum membrane. Within the ovary, required for the organization of somatic cells and oocytes into discrete follicular structures. This Mus musculus (Mouse) protein is Endoplasmic reticulum metallopeptidase 1.